Here is a 323-residue protein sequence, read N- to C-terminus: o-succinylbenzoate synthase (323 aa).

The active-site Proton donor is the Lys134. 3 residues coordinate Mg(2+): Asp162, Glu191, and Asp214. Residue Lys236 is the Proton acceptor of the active site.

The protein belongs to the mandelate racemase/muconate lactonizing enzyme family. MenC type 1 subfamily. It depends on a divalent metal cation as a cofactor.

It catalyses the reaction (1R,6R)-6-hydroxy-2-succinyl-cyclohexa-2,4-diene-1-carboxylate = 2-succinylbenzoate + H2O. It functions in the pathway quinol/quinone metabolism; 1,4-dihydroxy-2-naphthoate biosynthesis; 1,4-dihydroxy-2-naphthoate from chorismate: step 4/7. The protein operates within quinol/quinone metabolism; menaquinone biosynthesis. Converts 2-succinyl-6-hydroxy-2,4-cyclohexadiene-1-carboxylate (SHCHC) to 2-succinylbenzoate (OSB). The protein is o-succinylbenzoate synthase of Photorhabdus laumondii subsp. laumondii (strain DSM 15139 / CIP 105565 / TT01) (Photorhabdus luminescens subsp. laumondii).